A 375-amino-acid chain; its full sequence is MAGSQIKIPLPKPPDSDSQRLNAFPIIMAQEGKGRLLRQIRLRKILSGDPSDQQITFVNTYGFIRATPETSEFISESSPQKVTPVVTACMLSFGAGPVLEDPQHMLKALDQTDIRVRKTASDKEQILFEINRIPNLFRHHQISADHLIQASSDKYVKSPAKLIAGVNYIYCVTFLSVTVCSASLKFRVARPLLAARSRLVRAVQMEVLLRVTCKKDSQMAKSMLNDPEGEGCIASVWFHLCNLCKGRNKLRSYDENYFASKCRKMNLTVSIGDMWGPTILVHAGGHIPTTAKPFFNSRGWVCHPIHQSSPSLAKTLWSSGCEIKAASAILQGSDYASLAKTDDIIYSKIKVDKDAANYKGVSWSPFRKSASMSNL.

The protein belongs to the morbillivirus/respirovirus/rubulavirus M protein family.

The protein localises to the virion. Functionally, the M protein has a crucial role in virus assembly and interacts with the RNP complex as well as with the viral membrane. This is Matrix protein (M) from Homo sapiens (Human).